A 71-amino-acid chain; its full sequence is MPVIKVRENESFDVALRRFKRSCEKAGILAEVRAREFYEKPTTIRKRENATRAKRHAKRVARENARNTRLY.

Positions 47–71 are disordered; sequence RENATRAKRHAKRVARENARNTRLY. Residues 60–71 are compositionally biased toward basic and acidic residues; the sequence is VARENARNTRLY.

It belongs to the bacterial ribosomal protein bS21 family.

This Actinobacillus succinogenes (strain ATCC 55618 / DSM 22257 / CCUG 43843 / 130Z) protein is Small ribosomal subunit protein bS21.